A 341-amino-acid polypeptide reads, in one-letter code: Very-long-chain 3-oxoacyl-CoA reductase (341 aa).

A helical membrane pass occupies residues 22 to 42 (AIYGFLLAGVAAFAAPIVSTI). Residues leucine 67, aspartate 123, aspartate 131, asparagine 150, tyrosine 217, lysine 221, isoleucine 250, and threonine 252 each contribute to the NADP(+) site. Catalysis depends on tyrosine 217, which acts as the Proton donor. Lysine 221 functions as the Lowers pKa of active site Tyr in the catalytic mechanism.

It belongs to the short-chain dehydrogenases/reductases (SDR) family.

Its subcellular location is the endoplasmic reticulum membrane. It catalyses the reaction a very-long-chain (3R)-3-hydroxyacyl-CoA + NADP(+) = a very-long-chain 3-oxoacyl-CoA + NADPH + H(+). Its pathway is lipid metabolism; fatty acid biosynthesis. Its function is as follows. Component of the microsomal membrane bound fatty acid elongation system, which produces the 26-carbon very long-chain fatty acids (VLCFA) from palmitate. Catalyzes the reduction of the 3-ketoacyl-CoA intermediate that is formed in each cycle of fatty acid elongation. VLCFAs serve as precursors for ceramide and sphingolipids. The chain is Very-long-chain 3-oxoacyl-CoA reductase from Phaeosphaeria nodorum (strain SN15 / ATCC MYA-4574 / FGSC 10173) (Glume blotch fungus).